The following is a 503-amino-acid chain: D-xylose-proton symporter-like 1 (503 aa).

The disordered stretch occupies residues 1-23 (MGFDPENQSISSVGQVVGDSSSG). Over residues 8–23 (QSISSVGQVVGDSSSG) the composition is skewed to low complexity. The next 12 helical transmembrane spans lie at 51 to 73 (FLFPALGALLFGYEIGATSCAIM), 95 to 115 (IITSGSLYGALIGSIVAFSVA), 129 to 149 (FLYLVGAIVTVVAPVFSILII), 152 to 172 (VTYGMGIGLTMHAAPMYIAET), 190 to 210 (VLGMVGGYGIGSLWITVISGW), 213 to 233 (MYATILPFPVIMGTGMCWLPA), 305 to 325 (ALTIAGGLVLFQQITGQPSVL), 346 to 366 (ISILLGLLKLVMTGVSVIVID), 374 to 394 (LLCGVSGMVISLFLLGSYYMF), 405 to 425 (ALLLYVGCYQLSFGPIGWLMI), 437 to 457 (GISLAVLVNFGANALVTFAFS), and 467 to 487 (ILFCAFGVICVVSLFFIYYIV).

The protein belongs to the major facilitator superfamily. Sugar transporter (TC 2.A.1.1) family.

The protein resides in the membrane. The protein is D-xylose-proton symporter-like 1 of Arabidopsis thaliana (Mouse-ear cress).